Reading from the N-terminus, the 158-residue chain is MGIEGVLDKGFVTTSLDSLINWGRTGSMWPMTFGLACCAVEMMQTGASRYDLDRFGIVFRPSPRQSDVMIVAGTLCNKMAPALRKVYDQMAEPRWVISMGSCANGGGYYHYSYSVVRGCDRIVPVDIYVPGCPPTAEALLYGIIQLQNKIKRTNTIAR.

[4Fe-4S] cluster contacts are provided by Cys37, Cys38, Cys102, and Cys132.

Belongs to the complex I 20 kDa subunit family. NDH-1 is composed of 14 different subunits. Subunits NuoB, C, D, E, F, and G constitute the peripheral sector of the complex. [4Fe-4S] cluster is required as a cofactor.

It is found in the cell inner membrane. The catalysed reaction is a quinone + NADH + 5 H(+)(in) = a quinol + NAD(+) + 4 H(+)(out). In terms of biological role, NDH-1 shuttles electrons from NADH, via FMN and iron-sulfur (Fe-S) centers, to quinones in the respiratory chain. Couples the redox reaction to proton translocation (for every two electrons transferred, four hydrogen ions are translocated across the cytoplasmic membrane), and thus conserves the redox energy in a proton gradient. This is NADH-quinone oxidoreductase subunit B from Nitrosomonas europaea (strain ATCC 19718 / CIP 103999 / KCTC 2705 / NBRC 14298).